A 129-amino-acid chain; its full sequence is Small ribosomal subunit protein uS11 (129 aa).

It belongs to the universal ribosomal protein uS11 family. In terms of assembly, part of the 30S ribosomal subunit. Interacts with proteins S7 and S18. Binds to IF-3.

In terms of biological role, located on the platform of the 30S subunit, it bridges several disparate RNA helices of the 16S rRNA. Forms part of the Shine-Dalgarno cleft in the 70S ribosome. This Nitratidesulfovibrio vulgaris (strain DSM 19637 / Miyazaki F) (Desulfovibrio vulgaris) protein is Small ribosomal subunit protein uS11.